The sequence spans 94 residues: Alpha-conotoxin-like Cp20.2 (94 aa).

The first 24 residues, 1–24, serve as a signal peptide directing secretion; sequence MPKLAVVLLVLLILPLSYFDAAGG. Residues 25–45 constitute a propeptide that is removed on maturation; sequence QAVQWDRRGNGLARYLQRGDR. 4 cysteine pairs are disulfide-bonded: Cys-63/Cys-72, Cys-68/Cys-80, Cys-73/Cys-90, and Cys-78/Cys-92.

Belongs to the conotoxin D superfamily. In terms of assembly, hetero-, homo- or pseudo-homodimer (identical sequence, different post-translational modifications). In terms of tissue distribution, expressed by the venom duct.

The protein localises to the secreted. Functionally, alpha-conotoxins act on postsynaptic membranes, they bind to the nicotinic acetylcholine receptors (nAChR) and thus inhibit them. Through its two C-terminal domains, this homodimeric protein would bind to two nAChR allosteric sites, located outside the nAChR C-loop of the principal binding face and at the adjacent binding interface in a clockwise direction. This toxin specifically blocks mammalian neuronal nAChR of the alpha-7/CHRNA7, alpha-3-beta-2/CHRNA3-CHRNB2 and alpha-4-beta-2/CHRNA4-CHRNB2 subtypes. In Conus capitaneus (Captain cone), this protein is Alpha-conotoxin-like Cp20.2.